The following is a 360-amino-acid chain: 45 kDa calcium-binding protein (360 aa).

Residues M1–A29 form the signal peptide. N-linked (GlcNAc...) asparagine glycosylation occurs at N33. 5 EF-hand domains span residues R96–E131, E135–F170, M231–N266, W276–Y311, and N312–S347. Ca(2+) is bound by residues D109, N111, D113, Q115, E120, D148, D150, D152, H154, E159, D244, D246, D248, K250, E255, D289, N291, D293, E300, D325, N327, D329, H331, and E336.

Belongs to the CREC family.

It localises to the golgi apparatus lumen. Functionally, may regulate calcium-dependent activities in the endoplasmic reticulum lumen or post-ER compartment. This Xenopus tropicalis (Western clawed frog) protein is 45 kDa calcium-binding protein (sdf4).